The following is an 860-amino-acid chain: MQEQYRPEEIESKVQLHWDEKRTFEVTEDESKEKYYCLSMLPYPSGRLHMGHVRNYTIGDVIARYQRMLGKNVLQPIGWDAFGLPAEGAAVKNNTAPAPWTYDNIAYMKNQLKMLGFGYDWSRELATCTPEYYRWEQKFFTELYKKGLVYKKTSAVNWCPNDQTVLANEQVIDGCCWRCDTKVERKEIPQWFIKITAYADELLNDLDKLDHWPDTVKTMQRNWIGRSEGVEITFNVNDYDNTLTVYTTRPDTFMGCTYLAVAAGHPLAQKAAENNPELAAFIDECRNTKVAEAEMATMEKKGVDTGFKAVHPLTGEEIPVWAANFVLMEYGTGAVMAVPGHDQRDYEFASKYGLNIKPVILAADGSEPDLSQQALTEKGVLFNSGEFNGLDHEAAFNAIADKLTAMGVGERKVNYRLRDWGVSRQRYWGAPIPMVTLEDGTVMPTPDDQLPVILPEDVVMDGITSPIKADPEWAKTTINGMPALRETDTFDTFMESSWYYARYTCPQYKEGMLDSEAANYWLPVDIYIGGIEHAIMHLLYFRFFHKLMRDAGMVNSDEPAKQLLCQGMVLADAFYYVGENGERNWVSPVDAIVERDEKGRIVKAKDAAGHELVYTGMSKMSKSKNNGIDPQVMVERYGADTVRLFMMFASPADMTLEWQESGVEGANRFLKRVWKLVYEHTAKGDVAALNVDALTEDQKALRRDVHKTIAKVTDDIGRRQTFNTAIAAIMELMNKLAKAPTDGEQDRALMQEALLAVVRMLNPFTPHICFTLWQELKGEGDIDNAPWPVADEKAMVEDSTLVVVQVNGKVRAKITVPVDATEEQVRERAGQEHLVAKYLDGVTVRKVIYVPGKLLNLVVG.

The short motif at 42–52 (PYPSGRLHMGH) is the 'HIGH' region element. The short motif at 619–623 (KMSKS) is the 'KMSKS' region element. ATP is bound at residue Lys622.

Belongs to the class-I aminoacyl-tRNA synthetase family.

The protein localises to the cytoplasm. It catalyses the reaction tRNA(Leu) + L-leucine + ATP = L-leucyl-tRNA(Leu) + AMP + diphosphate. This chain is Leucine--tRNA ligase, found in Shigella dysenteriae serotype 1 (strain Sd197).